Consider the following 91-residue polypeptide: DNA-directed RNA polymerase subunit omega (91 aa).

It belongs to the RNA polymerase subunit omega family. The RNAP catalytic core consists of 2 alpha, 1 beta, 1 beta' and 1 omega subunit. When a sigma factor is associated with the core the holoenzyme is formed, which can initiate transcription.

It carries out the reaction RNA(n) + a ribonucleoside 5'-triphosphate = RNA(n+1) + diphosphate. Functionally, promotes RNA polymerase assembly. Latches the N- and C-terminal regions of the beta' subunit thereby facilitating its interaction with the beta and alpha subunits. The protein is DNA-directed RNA polymerase subunit omega of Yersinia pestis bv. Antiqua (strain Antiqua).